Reading from the N-terminus, the 322-residue chain is Acetylglutamate kinase (322 aa).

Residues 89-90, R111, and N217 each bind substrate; that span reads GG.

This sequence belongs to the acetylglutamate kinase family. ArgB subfamily.

It localises to the cytoplasm. The enzyme catalyses N-acetyl-L-glutamate + ATP = N-acetyl-L-glutamyl 5-phosphate + ADP. It functions in the pathway amino-acid biosynthesis; L-arginine biosynthesis; N(2)-acetyl-L-ornithine from L-glutamate: step 2/4. Its function is as follows. Catalyzes the ATP-dependent phosphorylation of N-acetyl-L-glutamate. The polypeptide is Acetylglutamate kinase (Ehrlichia ruminantium (strain Gardel)).